A 140-amino-acid polypeptide reads, in one-letter code: Nucleoside diphosphate kinase (140 aa).

Positions 11, 59, 87, 93, 104, and 114 each coordinate ATP. The active-site Pros-phosphohistidine intermediate is the His117.

It belongs to the NDK family. Homotetramer. The cofactor is Mg(2+).

The protein resides in the cytoplasm. The enzyme catalyses a 2'-deoxyribonucleoside 5'-diphosphate + ATP = a 2'-deoxyribonucleoside 5'-triphosphate + ADP. It catalyses the reaction a ribonucleoside 5'-diphosphate + ATP = a ribonucleoside 5'-triphosphate + ADP. In terms of biological role, major role in the synthesis of nucleoside triphosphates other than ATP. The ATP gamma phosphate is transferred to the NDP beta phosphate via a ping-pong mechanism, using a phosphorylated active-site intermediate. This Mesorhizobium japonicum (strain LMG 29417 / CECT 9101 / MAFF 303099) (Mesorhizobium loti (strain MAFF 303099)) protein is Nucleoside diphosphate kinase.